Here is a 168-residue protein sequence, read N- to C-terminus: Large ribosomal subunit protein uL10 (168 aa).

Belongs to the universal ribosomal protein uL10 family. As to quaternary structure, part of the ribosomal stalk of the 50S ribosomal subunit. The N-terminus interacts with L11 and the large rRNA to form the base of the stalk. The C-terminus forms an elongated spine to which L12 dimers bind in a sequential fashion forming a multimeric L10(L12)X complex.

Forms part of the ribosomal stalk, playing a central role in the interaction of the ribosome with GTP-bound translation factors. The polypeptide is Large ribosomal subunit protein uL10 (Clostridioides difficile (strain 630) (Peptoclostridium difficile)).